The sequence spans 394 residues: GPI transamidase component GAB1 (394 aa).

Topologically, residues M1 to S135 are cytoplasmic. The helical transmembrane segment at I136–V156 threads the bilayer. Residues L157–S160 are Lumenal-facing. Residues V161–L181 traverse the membrane as a helical segment. Residues G182 to R190 lie on the Cytoplasmic side of the membrane. A helical membrane pass occupies residues I191–I211. The Lumenal portion of the chain corresponds to L212–Y224. Residues G225–I245 traverse the membrane as a helical segment. The interval P235–F255 is may be involved in recognition of long-chain fatty acids in GPI. The Cytoplasmic portion of the chain corresponds to E246–T250. Residues F251–T271 form a helical membrane-spanning segment. Topologically, residues L272–S297 are lumenal. Residues L298 to L318 traverse the membrane as a helical segment. Over R319–S324 the chain is Cytoplasmic. Residues A325–L345 traverse the membrane as a helical segment. Residues G346–N351 are Lumenal-facing. Residues F352–N372 traverse the membrane as a helical segment. At W373–I394 the chain is on the cytoplasmic side.

The protein belongs to the PIGU family. In terms of assembly, forms a complex with GPI16, GPI17, GPI8 and GAA1.

It localises to the endoplasmic reticulum membrane. It participates in glycolipid biosynthesis; glycosylphosphatidylinositol-anchor biosynthesis. Component of the GPI transamidase complex. May be involved in the recognition of either the GPI attachment signal or the lipid portion of GPI. This Saccharomyces cerevisiae (strain ATCC 204508 / S288c) (Baker's yeast) protein is GPI transamidase component GAB1 (GAB1).